The chain runs to 99 residues: PqqA binding protein (99 aa).

Belongs to the PqqD family. In terms of assembly, monomer. Interacts with PqqE.

Its pathway is cofactor biosynthesis; pyrroloquinoline quinone biosynthesis. Functions as a PqqA binding protein and presents PqqA to PqqE, in the pyrroloquinoline quinone (PQQ) biosynthetic pathway. The polypeptide is PqqA binding protein (Acinetobacter baylyi (strain ATCC 33305 / BD413 / ADP1)).